The primary structure comprises 769 residues: MGRVGAGGTAREAATGSLLLLLLLLARPPPAAASNSKESEAGLVSEHFSQAPQKLSFYSWYGSTRLFHFRVPPDTVLLRWLLHVSQGSPSCTDEEITVHFRYGAPPVINPLGTSFPDNTLSHASFHIRALLSTLMLDNTSVNISHPAPGDWFLVAHLPPSSQKIQVKGFVPTCAYIFQPDMLVMRVVEVSTLEPDVPLPQTLLSYPSYLKIFVPEYTQELRLELQGCVSSVSPGCPVRVTVGATTLPRNFQRVLTCTGLAPSCHLLLSSPPWGRWLQVTFESLAEPHVTVGFTAKAVFTVCRPWSVTIHHLIQNNPNQTYDTSAIQLSQSAVHRDLGRSSRVDSGPFCLLNYPVLREDTDVVSVHFQPLNGAFVLVHSSMPSVMQLRLDTGMDSGGSFIIVLRTNKTEVTNGTLVAACVNAASPFLSFNTSLNCTTAFFQGYPMFLRASSHMANLIMPFPETDNWYLSLQLVCPESPEDCEQAVVRVETILYLVPCLNDCGPYGQCLLLRRYGYVYAGCSCKAGWRGWSCTDNSTAQTVAQQRAAALLLTLSNLMFLAPIAISLHRSFLVEASVYFYTMFFSTFYHACDQPGEAVLCILSYDTLQYCDFLGSGASTWVTILCMARLKTILKQVLLVLGTLVIAMSLQMDRRGIWNLMGPCVFAFVIMASMWIYRCGHRGQCYPTSWQRWVFYLLPGISMASVGIAMYTSMMTSDNYYYTHSIWHILLAGSAAFLLPPREEKAGSWACLQKFPCHYQICRNDRDELYTVT.

An N-terminal signal peptide occupies residues methionine 1–alanine 33. Topologically, residues serine 34–arginine 543 are extracellular. N-linked (GlcNAc...) asparagine glycosylation is found at asparagine 138 and asparagine 411. An EGF-like domain is found at proline 495–threonine 531. Intrachain disulfides connect cysteine 496-cysteine 506, cysteine 500-cysteine 519, and cysteine 521-cysteine 530. A helical transmembrane segment spans residues alanine 544 to leucine 564. Over histidine 565–serine 567 the chain is Cytoplasmic. Residues phenylalanine 568–cysteine 588 traverse the membrane as a helical segment. Over aspartate 589–threonine 603 the chain is Extracellular. A helical membrane pass occupies residues leucine 604–alanine 624. At arginine 625–lysine 627 the chain is on the cytoplasmic side. Residues threonine 628–methionine 648 traverse the membrane as a helical segment. Topologically, residues aspartate 649–arginine 651 are extracellular. The helical transmembrane segment at glycine 652–isoleucine 672 threads the bilayer. At tyrosine 673–arginine 688 the chain is on the cytoplasmic side. Residues tryptophan 689–serine 709 form a helical membrane-spanning segment. Residues methionine 710–asparagine 715 are Extracellular-facing. A helical membrane pass occupies residues tyrosine 716–proline 736. Residues proline 737–threonine 769 are Cytoplasmic-facing.

Belongs to the TMEM8 family. Glycosylated.

It localises to the cell membrane. Its subcellular location is the lysosome membrane. The enzyme catalyses a 1,2-diacyl-sn-glycero-3-phosphocholine + H2O = a 1-acyl-sn-glycero-3-phosphocholine + a fatty acid + H(+). In terms of biological role, involved in the lipid remodeling steps of GPI-anchor maturation. Lipid remodeling steps consist in the generation of 2 saturated fatty chains at the sn-2 position of GPI-anchor proteins (GPI-AP). Has phospholipase A2 activity that removes an acyl-chain at the sn-2 position of GPI-anchors during the remodeling of GPI. Required for the shedding of the GPI-AP CRIPTO, but not CFC1, at the cell surface. Shedding of CRIPTO modulates Nodal signaling by allowing soluble CRIPTO to act as a Nodal coreceptor on other cells. Also indirectly involved in the translocation of RAC1 from the cytosol to the plasma membrane by maintaining the steady state amount of CAV1-enriched plasma membrane subdomains, stabilizing RAC1 at the plasma membrane. This Mus musculus (Mouse) protein is Post-GPI attachment to proteins factor 6.